The primary structure comprises 817 residues: Phosphoenolpyruvate synthase (817 aa).

The active-site Tele-phosphohistidine intermediate is the histidine 442. Positions 540, 587, 684, 706, 707, 708, and 709 each coordinate substrate. Residue glutamate 684 coordinates Mg(2+). Position 709 (aspartate 709) interacts with Mg(2+). Cysteine 756 functions as the Proton donor in the catalytic mechanism.

Belongs to the PEP-utilizing enzyme family. Homooctamer. The cofactor is Mg(2+).

The catalysed reaction is pyruvate + ATP + H2O = phosphoenolpyruvate + AMP + phosphate + 2 H(+). It functions in the pathway carbohydrate biosynthesis; gluconeogenesis. Functionally, catalyzes the phosphorylation of pyruvate to phosphoenolpyruvate. This chain is Phosphoenolpyruvate synthase (ppsA), found in Pyrococcus furiosus (strain ATCC 43587 / DSM 3638 / JCM 8422 / Vc1).